The chain runs to 72 residues: uncharacterized protein (72 aa).

The chain crosses the membrane as a helical span at residues 23–45; sequence ITNLLITTILLCFFNATTYWKLF.

The protein resides in the membrane. This is an uncharacterized protein from Schizosaccharomyces pombe (strain 972 / ATCC 24843) (Fission yeast).